A 187-amino-acid chain; its full sequence is Prepronociceptin (187 aa).

The signal sequence occupies residues 1-19; sequence MKILFCDVLLLSLLSSVFS. A propeptide spanning residues 20-95 is cleaved from the precursor; that stretch reads SCPRDCLTCQ…QPKASEMQHL (76 aa). Repeat copies occupy residues 109 to 114, 115 to 120, and 121 to 126. A 3 X 6 AA tandem repeats of D-A-E-P-G-A region spans residues 109–126; it reads DAEPGADAEPGADAEPGA. The disordered stretch occupies residues 109 to 133; the sequence is DAEPGADAEPGADAEPGADDAEEVE. The segment covering 112-131 has biased composition (acidic residues); sequence PGADAEPGADAEPGADDAEE. Residues 180–187 constitute a propeptide that is removed on maturation; it reads TLHQNGNV.

The protein belongs to the opioid neuropeptide precursor family. In terms of processing, specific enzymatic cleavages at paired basic residues probably yield other active peptides besides nociceptin. Post-translationally, the N-terminal domain contains 6 conserved cysteines thought to be involved in disulfide bonding and/or processing. Brain and spinal cord. Low levels in kidney and spleen.

The protein resides in the secreted. Functionally, ligand of the opioid receptor-like receptor OPRL1. It may act as a transmitter in the brain by modulating nociceptive and locomotor behavior. May be involved in neuronal differentiation and development. When administered intracerebroventricularly, nociceptin induces hyperalgesia and decreases locomotor activity. Blocks nociceptin action in pain transmission by inhibiting nociceptin-induced hyperalgesia and allodynia. In terms of biological role, has potent analgesic activity. The polypeptide is Prepronociceptin (Pnoc) (Mus musculus (Mouse)).